Reading from the N-terminus, the 258-residue chain is MHISSTLAVPDTADTPHHVAIIMDGNGRWATERHLPRMAGHSRGLDAVRAAVQAADHRGVRYLTLFAFSSENWRRPAEEISFLMKLFMTALRREVSKLNDSGIRLRVVGDLSAFSPRIQLMIREAEAKTATNPGLTVTIAANYGGRWDILQAMRALVADQPDIAPEAITEEALSPYMALAYASEPDLFIRTGGEQRISNFMLWQLAYSELYFTERYWPDFDAAEMDRAFAWYRNRERRFGRTSAQLEPGTAPALSAGA.

Asp24 is an active-site residue. Asp24 serves as a coordination point for Mg(2+). Substrate is bound by residues 25–28 (GNGR), Trp29, Arg37, His41, and 69–71 (SSE). Asn72 (proton acceptor) is an active-site residue. Substrate-binding positions include Trp73, Arg75, Arg190, and 196 to 198 (RIS). Glu209 contacts Mg(2+).

This sequence belongs to the UPP synthase family. In terms of assembly, homodimer. Mg(2+) is required as a cofactor.

Its function is as follows. Catalyzes the condensation of isopentenyl diphosphate (IPP) with allylic pyrophosphates generating different type of terpenoids. The protein is Isoprenyl transferase of Ralstonia nicotianae (strain ATCC BAA-1114 / GMI1000) (Ralstonia solanacearum).